Consider the following 244-residue polypeptide: Carboxy-S-adenosyl-L-methionine synthase (244 aa).

S-adenosyl-L-methionine contacts are provided by residues Tyr-40, 65-67 (GCS), 90-91 (DN), 119-120 (DL), Asn-134, and Arg-201.

The protein belongs to the class I-like SAM-binding methyltransferase superfamily. Cx-SAM synthase family. In terms of assembly, homodimer.

It carries out the reaction prephenate + S-adenosyl-L-methionine = carboxy-S-adenosyl-L-methionine + 3-phenylpyruvate + H2O. Functionally, catalyzes the conversion of S-adenosyl-L-methionine (SAM) to carboxy-S-adenosyl-L-methionine (Cx-SAM). In Trichlorobacter lovleyi (strain ATCC BAA-1151 / DSM 17278 / SZ) (Geobacter lovleyi), this protein is Carboxy-S-adenosyl-L-methionine synthase.